We begin with the raw amino-acid sequence, 182 residues long: Ferritin heavy chain (182 aa).

Residue Met1 is modified to N-acetylmethionine. An N-acetylthreonine; in Ferritin heavy chain, N-terminally processed modification is found at Thr2. One can recognise a Ferritin-like diiron domain in the interval 11–160 (QNYHQDSEAA…DHVTNLRRMG (150 aa)). Glu28, Glu63, His66, Glu108, and Gln142 together coordinate Fe cation.

It belongs to the ferritin family. Oligomer of 24 subunits. There are two types of subunits: L (light) chain and H (heavy) chain. The major chain can be light or heavy, depending on the species and tissue type. The functional molecule forms a roughly spherical shell with a diameter of 12 nm and contains a central cavity into which the insoluble mineral iron core is deposited. Interacts with NCOA4; NCOA4 promotes targeting of the iron-binding ferritin complex to autolysosomes following starvation or iron depletion.

It localises to the cytoplasm. The protein resides in the lysosome. The protein localises to the cytoplasmic vesicle. It is found in the autophagosome. It catalyses the reaction 4 Fe(2+) + O2 + 4 H(+) = 4 Fe(3+) + 2 H2O. Functionally, stores iron in a soluble, non-toxic, readily available form. Important for iron homeostasis. Has ferroxidase activity. Iron is taken up in the ferrous form and deposited as ferric hydroxides after oxidation. Also plays a role in delivery of iron to cells. Mediates iron uptake in capsule cells of the developing kidney. Delivery to lysosomes is mediated by the cargo receptor NCOA4 for autophagic degradation and release of iron. The protein is Ferritin heavy chain (FTH1) of Equus caballus (Horse).